Here is a 519-residue protein sequence, read N- to C-terminus: Maltose/maltodextrin transport system permease protein MalF (519 aa).

Residues 1 to 18 (MRKNPMDVIKKKHWWQSD) lie on the Cytoplasmic side of the membrane. The chain crosses the membrane as a helical span at residues 19-41 (ALKWSVLGLLGLLVGYLVVLMYA). Residues 42 to 44 (QGE) are Periplasmic-facing. Residues 45 to 62 (YLFAITTLILSSAGLYIF) traverse the membrane as a helical segment. At 63–74 (ANRKAYAWRYVY) the chain is on the cytoplasmic side. A helical membrane pass occupies residues 75–97 (PGMAGMGLFVLFPLVCTIAIAFT). The Periplasmic portion of the chain corresponds to 98–288 (NYSSTNQLTF…QKPFLAIFVW (191 aa)). The ABC transmembrane type-1 domain maps to 286-510 (FVWTVVFSLI…LLVGALAIVN (225 aa)). Residues 289–311 (TVVFSLITVFLTVAVGMVLACLV) traverse the membrane as a helical segment. The Cytoplasmic segment spans residues 312-323 (QWEALRGKAVYR). A helical membrane pass occupies residues 324–346 (VLLILPYAVPSFISILIFKGLFN). Residues 347 to 374 (QSFGEINMMLSALFGVKPAWFSDPTTAR) lie on the Periplasmic side of the membrane. Residues 375 to 397 (TMLIIVNTWLGYPYMMILCMGLL) traverse the membrane as a helical segment. Topologically, residues 398-417 (KAIPDDLYEASAMDGAGPFQ) are cytoplasmic. A helical membrane pass occupies residues 418–440 (NFFKITLPLLIKPLTPLMIASFA). Topologically, residues 441 to 488 (FNFNNFVLIQLLTNGGPDRLGTTTPAGYTDLLVNYTYRIAFEGGGGQD) are periplasmic. Residues 489-511 (FGLAAAIATLIFLLVGALAIVNL) traverse the membrane as a helical segment. The Cytoplasmic segment spans residues 512-519 (KATRMKFD).

Belongs to the binding-protein-dependent transport system permease family. MalFG subfamily. In terms of assembly, the complex is composed of two ATP-binding proteins (MalK), two transmembrane proteins (MalG and MalF) and a solute-binding protein (MalE).

The protein localises to the cell inner membrane. Part of the ABC transporter complex MalEFGK involved in maltose/maltodextrin import. Probably responsible for the translocation of the substrate across the membrane. This chain is Maltose/maltodextrin transport system permease protein MalF (malF), found in Escherichia coli O6:H1 (strain CFT073 / ATCC 700928 / UPEC).